The primary structure comprises 638 residues: MAGGSATTWGYPVALLLLVATLGLGRWLQPDPGLPGLRHSYDCGIKGMQLLVFPRPGQTLRFKVVDEFGNRFDVNNCSICYHWVTSRPQEPAVFSADYRGCHVLEKDGRFHLRVFMEAVLPNGRVDVAQDATLICPKPDPSRTLDSQLAPPAMFSVSTPQTLSFLPTSGHTSQGSGHAFPSPLDPGHSSVHPTPALPSPGPGPTLATLAQPHWGTLEHWDVNKRDYIGTHLSQEQCQVASGHLPCIVRRTSKEACQQAGCCYDNTREVPCYYGNTATVQCFRDGYFVLVVSQEMALTHRITLANIHLAYAPTSCSPTQHTEAFVVFYFPLTHCGTTMQVAGDQLIYENWLVSGIHIQKGPQGSITRDSTFQLHVRCVFNASDFLPIQASIFPPPSPAPMTQPGPLRLELRIAKDETFSSYYGEDDYPIVRLLREPVHVEVRLLQRTDPNLVLLLHQCWGAPSANPFQQPQWPILSDGCPFKGDSYRTQMVALDGATPFQSHYQRFTVATFALLDSGSQRALRGLVYLFCSTSACHTSGLETCSTACSTGTTRQRRSSGHRNDTARPQDIVSSPGPVGFEDSYGQEPTLGPTDSNGNSSLRPLLWAVLLLPAVALVLGFGVFVGLSQTWAQKLWESNRQ.

Residues 1 to 25 (MAGGSATTWGYPVALLLLVATLGLG) form the signal peptide. Residues 26–601 (RWLQPDPGLP…DSNGNSSLRP (576 aa)) are Extracellular-facing. N-linked (GlcNAc...) asparagine glycosylation occurs at Asn-76. The span at 165–175 (LPTSGHTSQGS) shows a compositional bias: polar residues. Residues 165 to 208 (LPTSGHTSQGSGHAFPSPLDPGHSSVHPTPALPSPGPGPTLATL) are disordered. The P-type domain maps to 234-274 (EQCQVASGHLPCIVRRTSKEACQQAGCCYDNTREVPCYYGN). Cystine bridges form between Cys-236-Cys-261, Cys-245-Cys-260, and Cys-255-Cys-270. The ZP domain occupies 279-553 (QCFRDGYFVL…TACSTGTTRQ (275 aa)). Asn-379 carries N-linked (GlcNAc...) asparagine glycosylation. Cys-457 and Cys-478 are disulfide-bonded. The interval 549–594 (GTTRQRRSSGHRNDTARPQDIVSSPGPVGFEDSYGQEPTLGPTDSN) is disordered. The propeptide at 554 to 638 (RRSSGHRNDT…AQKLWESNRQ (85 aa)) is removed in mature form. N-linked (GlcNAc...) asparagine glycans are attached at residues Asn-561 and Asn-596. Residues 602 to 622 (LLWAVLLLPAVALVLGFGVFV) traverse the membrane as a helical segment. Over 623 to 638 (GLSQTWAQKLWESNRQ) the chain is Cytoplasmic.

Belongs to the ZP domain family. ZPB subfamily. As to quaternary structure, polymers of ZP2 and ZP3 organized into long filaments cross-linked by ZP1 homodimers. Interacts with ZP3. Post-translationally, proteolytically cleaved before the transmembrane segment to yield the secreted ectodomain incorporated in the zona pellucida. O-glycosylated. As to expression, expressed in oocytes (at protein level).

The protein localises to the zona pellucida. It localises to the cell membrane. Component of the zona pellucida, an extracellular matrix surrounding oocytes which mediates sperm binding, induction of the acrosome reaction and prevents post-fertilization polyspermy. The zona pellucida is composed of 3 to 4 glycoproteins, ZP1, ZP2, ZP3, and ZP4. ZP1 ensures the structural integrity of the zona pellucida. The chain is Zona pellucida sperm-binding protein 1 (ZP1) from Homo sapiens (Human).